The sequence spans 81 residues: ATP synthase subunit c, chloroplastic (81 aa).

2 helical membrane-spanning segments follow: residues 7-27 (AASVIAAGLAVGLASIGPGIG) and 57-77 (LAFMEALTIYGLVVALALLFA).

It belongs to the ATPase C chain family. As to quaternary structure, F-type ATPases have 2 components, F(1) - the catalytic core - and F(0) - the membrane proton channel. F(1) has five subunits: alpha(3), beta(3), gamma(1), delta(1), epsilon(1). F(0) has four main subunits: a(1), b(1), b'(1) and c(10-14). The alpha and beta chains form an alternating ring which encloses part of the gamma chain. F(1) is attached to F(0) by a central stalk formed by the gamma and epsilon chains, while a peripheral stalk is formed by the delta, b and b' chains.

It is found in the plastid. The protein resides in the chloroplast thylakoid membrane. F(1)F(0) ATP synthase produces ATP from ADP in the presence of a proton or sodium gradient. F-type ATPases consist of two structural domains, F(1) containing the extramembraneous catalytic core and F(0) containing the membrane proton channel, linked together by a central stalk and a peripheral stalk. During catalysis, ATP synthesis in the catalytic domain of F(1) is coupled via a rotary mechanism of the central stalk subunits to proton translocation. Its function is as follows. Key component of the F(0) channel; it plays a direct role in translocation across the membrane. A homomeric c-ring of between 10-14 subunits forms the central stalk rotor element with the F(1) delta and epsilon subunits. This chain is ATP synthase subunit c, chloroplastic, found in Pelargonium hortorum (Common geranium).